A 393-amino-acid polypeptide reads, in one-letter code: Probable xylan O-acetyltransferase 11 (393 aa).

The Cytoplasmic portion of the chain corresponds to 1–9 (MHQPAIMQR). The helical; Signal-anchor for type II membrane protein transmembrane segment at 10 to 26 (ALAVVALLAAAAAIAAA) threads the bilayer. The Lumenal portion of the chain corresponds to 27-393 (QGESPELLPF…LFFPARDEAI (367 aa)). Cystine bridges form between cysteine 45/cysteine 96, cysteine 67/cysteine 132, cysteine 76/cysteine 368, and cysteine 283/cysteine 364. Residue asparagine 102 is glycosylated (N-linked (GlcNAc...) asparagine). A GDS motif motif is present at residues 119-121 (GDS). The active-site Nucleophile is serine 121. Asparagine 325 carries N-linked (GlcNAc...) asparagine glycosylation. The Proton donor role is filled by aspartate 363. The DXXH motif motif lies at 363–366 (DCTH). The active-site Proton acceptor is the histidine 366.

The protein belongs to the PC-esterase family. TBL subfamily. Expressed in roots, leaves and stems.

The protein localises to the golgi apparatus membrane. Probable xylan acetyltransferase required for 2-O- and 3-O-monoacetylation of xylosyl residues in xylan. Possesses extremely low activity in vitro. The chain is Probable xylan O-acetyltransferase 11 from Oryza sativa subsp. japonica (Rice).